Reading from the N-terminus, the 242-residue chain is Ribosomal RNA small subunit methyltransferase G (242 aa).

S-adenosyl-L-methionine-binding positions include glycine 82, phenylalanine 87, 133 to 134, and arginine 152; that span reads AE.

This sequence belongs to the methyltransferase superfamily. RNA methyltransferase RsmG family.

It is found in the cytoplasm. Functionally, specifically methylates the N7 position of a guanine in 16S rRNA. The chain is Ribosomal RNA small subunit methyltransferase G from Acetivibrio thermocellus (strain ATCC 27405 / DSM 1237 / JCM 9322 / NBRC 103400 / NCIMB 10682 / NRRL B-4536 / VPI 7372) (Clostridium thermocellum).